A 252-amino-acid polypeptide reads, in one-letter code: Uridylate kinase (252 aa).

27 to 30 (KLGG) is an ATP binding site. UMP is bound at residue glycine 68. ATP contacts are provided by glycine 69 and arginine 73. Residues aspartate 88 and 149-156 (MGLPYFST) contribute to the UMP site. ATP-binding residues include tyrosine 182 and aspartate 185.

It belongs to the UMP kinase family. As to quaternary structure, homohexamer.

Its subcellular location is the cytoplasm. The enzyme catalyses UMP + ATP = UDP + ADP. It functions in the pathway pyrimidine metabolism; CTP biosynthesis via de novo pathway; UDP from UMP (UMPK route): step 1/1. Inhibited by UTP. Its function is as follows. Catalyzes the reversible phosphorylation of UMP to UDP. The protein is Uridylate kinase of Mycobacterium sp. (strain JLS).